A 479-amino-acid chain; its full sequence is Catalase A (479 aa).

The segment covering 1–21 (MSKILTTASGAPVADNQNSRS) has biased composition (polar residues). The tract at residues 1–25 (MSKILTTASGAPVADNQNSRSAGPR) is disordered. Residues His53 and Asn126 contribute to the active site. Residue Tyr336 coordinates heme. The disordered stretch occupies residues 350–376 (QLPVNAPRCPVNSYQRDGSMATGSYGS). Positions 361–376 (NSYQRDGSMATGSYGS) are enriched in polar residues.

Belongs to the catalase family. The cofactor is heme.

The catalysed reaction is 2 H2O2 = O2 + 2 H2O. With respect to regulation, activated by peroxide. In terms of biological role, the major expressed catalase protein in strain Corvallis in stationary phase. Decomposes hydrogen peroxide into water and oxygen; serves to protect cells from the toxic effects of hydrogen peroxide. The protein is Catalase A (katA) of Pseudomonas putida (Arthrobacter siderocapsulatus).